Consider the following 669-residue polypeptide: Putative transcription factor SOX-14 (669 aa).

Polar residues predominate over residues 1–12; the sequence is MIAKPNQATTEP. Disordered regions lie at residues 1-149, 254-336, and 419-439; these read MIAK…EMTL, YKYR…PKYE, and SSLT…MDNI. Over residues 17–37 the composition is skewed to low complexity; it reads RPGTVPTVPATTPARPATITI. Over residues 52 to 71 the composition is skewed to pro residues; sequence TLPPFSPSPSPASSPSPAPA. A compositionally biased stretch (polar residues) spans 75–84; sequence GAQKTQSQAA. Residues 88–105 show a composition bias toward low complexity; the sequence is PAAVASPSAPVAAAAPKT. The segment covering 130–145 has biased composition (basic and acidic residues); it reads RESEMDGERSPSHSGH. Residues 187 to 255 constitute a DNA-binding region (HMG box); it reads IKRPMNAFMV…LHMIEYPNYK (69 aa). Positions 284–294 are enriched in low complexity; that stretch reads TTNNNNSLTTL. The span at 295–318 shows a compositional bias: polar residues; it reads AINGTTTAGRKSKRSTSTCQSGSA. Over residues 322 to 336 the composition is skewed to basic and acidic residues; the sequence is LRNDSGDTSSKPKYE. Polar residues predominate over residues 419–431; sequence SSLTQSQHNQSDP.

The protein localises to the nucleus. This is Putative transcription factor SOX-14 (Sox14) from Drosophila melanogaster (Fruit fly).